The primary structure comprises 251 residues: Ubiquinone/menaquinone biosynthesis C-methyltransferase UbiE (251 aa).

S-adenosyl-L-methionine is bound by residues T74, D95, and 123 to 124 (NA).

This sequence belongs to the class I-like SAM-binding methyltransferase superfamily. MenG/UbiE family.

The enzyme catalyses a 2-demethylmenaquinol + S-adenosyl-L-methionine = a menaquinol + S-adenosyl-L-homocysteine + H(+). It catalyses the reaction a 2-methoxy-6-(all-trans-polyprenyl)benzene-1,4-diol + S-adenosyl-L-methionine = a 5-methoxy-2-methyl-3-(all-trans-polyprenyl)benzene-1,4-diol + S-adenosyl-L-homocysteine + H(+). The protein operates within quinol/quinone metabolism; menaquinone biosynthesis; menaquinol from 1,4-dihydroxy-2-naphthoate: step 2/2. It functions in the pathway cofactor biosynthesis; ubiquinone biosynthesis. Functionally, methyltransferase required for the conversion of demethylmenaquinol (DMKH2) to menaquinol (MKH2) and the conversion of 2-polyprenyl-6-methoxy-1,4-benzoquinol (DDMQH2) to 2-polyprenyl-3-methyl-6-methoxy-1,4-benzoquinol (DMQH2). The sequence is that of Ubiquinone/menaquinone biosynthesis C-methyltransferase UbiE from Psychromonas ingrahamii (strain DSM 17664 / CCUG 51855 / 37).